We begin with the raw amino-acid sequence, 449 residues long: Phosphomethylpyrimidine synthase (449 aa).

Residues Asn80, Met109, Tyr138, His173, 193-195 (SRG), 234-237 (DSLR), and Glu273 contribute to the substrate site. Position 277 (His277) interacts with Zn(2+). Tyr300 serves as a coordination point for substrate. His341 provides a ligand contact to Zn(2+). Positions 421, 424, and 429 each coordinate [4Fe-4S] cluster.

It belongs to the ThiC family. As to quaternary structure, homodimer. It depends on [4Fe-4S] cluster as a cofactor.

It carries out the reaction 5-amino-1-(5-phospho-beta-D-ribosyl)imidazole + S-adenosyl-L-methionine = 4-amino-2-methyl-5-(phosphooxymethyl)pyrimidine + CO + 5'-deoxyadenosine + formate + L-methionine + 3 H(+). Its pathway is cofactor biosynthesis; thiamine diphosphate biosynthesis. Catalyzes the synthesis of the hydroxymethylpyrimidine phosphate (HMP-P) moiety of thiamine from aminoimidazole ribotide (AIR) in a radical S-adenosyl-L-methionine (SAM)-dependent reaction. In Campylobacter hominis (strain ATCC BAA-381 / DSM 21671 / CCUG 45161 / LMG 19568 / NCTC 13146 / CH001A), this protein is Phosphomethylpyrimidine synthase.